A 120-amino-acid chain; its full sequence is Large ribosomal subunit protein uL18 (120 aa).

The protein belongs to the universal ribosomal protein uL18 family. In terms of assembly, part of the 50S ribosomal subunit; part of the 5S rRNA/L5/L18/L25 subcomplex. Contacts the 5S and 23S rRNAs.

Its function is as follows. This is one of the proteins that bind and probably mediate the attachment of the 5S RNA into the large ribosomal subunit, where it forms part of the central protuberance. This Treponema pallidum (strain Nichols) protein is Large ribosomal subunit protein uL18.